A 740-amino-acid polypeptide reads, in one-letter code: Catalase-peroxidase (740 aa).

An N-terminal signal peptide occupies residues 1–27 (MFKSTLPIAAAISVALTSMVLPAKALA). The segment at residues 106 to 228 (WHSAGVYRVH…LAAVEMGLIY (123 aa)) is a cross-link (tryptophyl-tyrosyl-methioninium (Trp-Tyr) (with M-254)). His107 (proton acceptor) is an active-site residue. A cross-link (tryptophyl-tyrosyl-methioninium (Tyr-Met) (with W-106)) is located at residues 228-254 (YVNPEGPHGKPDPLLAANDIRMSFGRM). A heme b-binding site is contributed by His269.

The protein belongs to the peroxidase family. Peroxidase/catalase subfamily. In terms of assembly, homodimer or homotetramer. It depends on heme b as a cofactor. Formation of the three residue Trp-Tyr-Met cross-link is important for the catalase, but not the peroxidase activity of the enzyme.

The catalysed reaction is H2O2 + AH2 = A + 2 H2O. It catalyses the reaction 2 H2O2 = O2 + 2 H2O. Bifunctional enzyme with both catalase and broad-spectrum peroxidase activity. The sequence is that of Catalase-peroxidase from Colwellia psychrerythraea (strain 34H / ATCC BAA-681) (Vibrio psychroerythus).